Here is a 403-residue protein sequence, read N- to C-terminus: Tryptophan synthase beta chain 1 (403 aa).

Lys-93 carries the N6-(pyridoxal phosphate)lysine modification.

It belongs to the TrpB family. As to quaternary structure, tetramer of two alpha and two beta chains. Pyridoxal 5'-phosphate serves as cofactor.

It carries out the reaction (1S,2R)-1-C-(indol-3-yl)glycerol 3-phosphate + L-serine = D-glyceraldehyde 3-phosphate + L-tryptophan + H2O. Its pathway is amino-acid biosynthesis; L-tryptophan biosynthesis; L-tryptophan from chorismate: step 5/5. In terms of biological role, the beta subunit is responsible for the synthesis of L-tryptophan from indole and L-serine. The polypeptide is Tryptophan synthase beta chain 1 (trpB1) (Methanosarcina acetivorans (strain ATCC 35395 / DSM 2834 / JCM 12185 / C2A)).